We begin with the raw amino-acid sequence, 72 residues long: Translation initiation factor IF-1 (72 aa).

One can recognise an S1-like domain in the interval 1 to 72 (MAKEDNIEMQ…SKGRIVFRSR (72 aa)).

This sequence belongs to the IF-1 family. In terms of assembly, component of the 30S ribosomal translation pre-initiation complex which assembles on the 30S ribosome in the order IF-2 and IF-3, IF-1 and N-formylmethionyl-tRNA(fMet); mRNA recruitment can occur at any time during PIC assembly.

The protein resides in the cytoplasm. One of the essential components for the initiation of protein synthesis. Stabilizes the binding of IF-2 and IF-3 on the 30S subunit to which N-formylmethionyl-tRNA(fMet) subsequently binds. Helps modulate mRNA selection, yielding the 30S pre-initiation complex (PIC). Upon addition of the 50S ribosomal subunit IF-1, IF-2 and IF-3 are released leaving the mature 70S translation initiation complex. This is Translation initiation factor IF-1 from Shewanella loihica (strain ATCC BAA-1088 / PV-4).